The sequence spans 1019 residues: MRNGLVWLLHPALPGTLRSILGARPPPAKRLCGFPKQTYSTMSNPAIQRIEDQIVKSPEDKREYRGLELANGIKVLLISDPTTDKSSAALDVHIGSLSDPPNIPGLSHFCEHMLFLGTKKYPKENEYSQFLSEHAGSSNAFTSGEHTNYYFDVSHEHLEGALDRFAQFFLCPLLDASCKDREVNAVDSEHEKNVMNDAWRLFQLEKATGNPKHPFSKFGTGNKYTLETRPNQEGIDVREELLKFHSTYYSSNLMAICVLGRESLDDLTNLVVKLFSEVENKNVPLPEFPEHPFQEEHLRQLYKIVPIKDIRNLYVTFPIPDLQQYYKSNPGYYLGHLIGHEGPGSLLSELKSKGWVNTLVGGQKEGARGFMFFIINVDLTEEGLLHVEDIILHMFQYIQKLRAEGPQEWVFQECKDLNAVAFRFKDKERPRGYTSKIAGKLHYYPLNGVLTAEYLLEEFRPDLIDMVLDKLRPENVRVAIVSKSFEGKTDRTEQWYGTQYKQEAIPEDVIQKWQNADLNGKFKLPTKNEFIPTNFEILSLEKDATPYPALIKDTAMSKLWFKQDDKFFLPKACLNFEFFSPFAYVDPLHCNMAYLYLELLKDSLNEYAYAAELAGLSYDLQNTIYGMYLSVKRYNDKQPILLKKITEKMATFEIDKKRFEIIKEAYMRSLNNFRAEQPHQHAMYYLRLLMTEVAWTKDELKEALDDVTLPRLKAFIPQLLSRLHIEALLHGNITKQAALGVMQMVEDTLIEHAHTKPLLPSQLVRYREVQLPDRGWFVYQQRNEVHNNCGIEIYYQTDMQSTSENMFLELFCQIISEPCFNTLRTKEQLGYIVFSGPRRANGIQGLRFIIQSEKPPHYLESRVEAFLITMEKAIEDMTEEAFQKHIQALAIRRLDKPKKLSAECAKYWGEIISQQYNYDRDNIEVAYLKTLTKDDIIRFYQEMLAVDAPRRHKVSVHVLAREMDSCPVVGEFPSQNDINLSEAPPLPQPEVIHNMTEFKRGLPLFPLVKPHINFMAAKL.

His-108 lines the Zn(2+) pocket. Glu-111 acts as the Proton acceptor in catalysis. Zn(2+) contacts are provided by His-112 and Glu-189. At Lys-192 the chain carries N6-succinyllysine. Position 359-363 (359-363 (LVGGQ)) interacts with substrate. Arg-429 contributes to the ATP binding site. Lys-697 carries the N6-succinyllysine modification. The SlyX motif motif lies at 853–858 (EKPPHY). 895 to 901 (DKPKKLS) serves as a coordination point for ATP.

The protein belongs to the peptidase M16 family. Homodimer. Can also form homotetramers. Zn(2+) serves as cofactor. Detected in brain and liver (at protein level). Detected in liver.

It localises to the cytoplasm. The protein localises to the cytosol. Its subcellular location is the cell membrane. The protein resides in the secreted. The catalysed reaction is Degradation of insulin, glucagon and other polypeptides. No action on proteins.. Its activity is regulated as follows. Activated by ATP, other nucleotide triphosphates and small peptides. Inhibited by bacitracin. Plays a role in the cellular breakdown of insulin, APP peptides, IAPP peptides, natriuretic peptides, glucagon, bradykinin, kallidin, and other peptides, and thereby plays a role in intercellular peptide signaling. Substrate binding induces important conformation changes, making it possible to bind and degrade larger substrates, such as insulin. Contributes to the regulation of peptide hormone signaling cascades and regulation of blood glucose homeostasis via its role in the degradation of insulin, glucagon and IAPP. Plays a role in the degradation and clearance of APP-derived amyloidogenic peptides that are secreted by neurons and microglia. Degrades the natriuretic peptides ANP, BNP and CNP, inactivating their ability to raise intracellular cGMP. Also degrades an aberrant frameshifted 40-residue form of NPPA (fsNPPA) which is associated with familial atrial fibrillation in heterozygous patients. Involved in antigen processing. Produces both the N terminus and the C terminus of MAGEA3-derived antigenic peptide (EVDPIGHLY) that is presented to cytotoxic T lymphocytes by MHC class I. The protein is Insulin-degrading enzyme (Ide) of Mus musculus (Mouse).